The primary structure comprises 657 residues: tRNA 5-methylaminomethyl-2-thiouridine biosynthesis bifunctional protein MnmC (657 aa).

A tRNA (mnm(5)s(2)U34)-methyltransferase region spans residues 1–235 (MSDAHNAQLD…KREMLAGPFQ (235 aa)). The interval 261-657 (IGAGLAGCAT…QLIRGTGSPT (397 aa)) is FAD-dependent cmnm(5)s(2)U34 oxidoreductase.

The protein in the N-terminal section; belongs to the methyltransferase superfamily. tRNA (mnm(5)s(2)U34)-methyltransferase family. It in the C-terminal section; belongs to the DAO family. The cofactor is FAD.

Its subcellular location is the cytoplasm. It catalyses the reaction 5-aminomethyl-2-thiouridine(34) in tRNA + S-adenosyl-L-methionine = 5-methylaminomethyl-2-thiouridine(34) in tRNA + S-adenosyl-L-homocysteine + H(+). Its function is as follows. Catalyzes the last two steps in the biosynthesis of 5-methylaminomethyl-2-thiouridine (mnm(5)s(2)U) at the wobble position (U34) in tRNA. Catalyzes the FAD-dependent demodification of cmnm(5)s(2)U34 to nm(5)s(2)U34, followed by the transfer of a methyl group from S-adenosyl-L-methionine to nm(5)s(2)U34, to form mnm(5)s(2)U34. The sequence is that of tRNA 5-methylaminomethyl-2-thiouridine biosynthesis bifunctional protein MnmC from Ectopseudomonas mendocina (strain ymp) (Pseudomonas mendocina).